Consider the following 301-residue polypeptide: Multifunctional dioxygenase ausE (301 aa).

Residues R72 and Q127 each contribute to the substrate site. Residues H130 and D132 each coordinate Fe cation. Residue T167 participates in substrate binding. H214 is a Fe cation binding site. R226 contacts substrate.

The protein belongs to the PhyH family. As to quaternary structure, homodimer. Fe cation serves as cofactor.

The catalysed reaction is preaustinoid A1 + 2-oxoglutarate + O2 = preaustinoid A2 + succinate + CO2 + H2O. It carries out the reaction preaustinoid A2 + 2-oxoglutarate + O2 = preaustinoid A3 + succinate + CO2 + H2O. It catalyses the reaction berkeleyone A + 2-oxoglutarate + O2 = preaustinoid A + succinate + CO2 + H2O. It functions in the pathway secondary metabolite biosynthesis; terpenoid biosynthesis. In terms of biological role, multifunctional dioxygenase; part of the gene cluster A that mediates the biosynthesis of the fungal meroterpenoid acetoxydehydroaustin. The first step of the pathway is the synthesis of 3,5-dimethylorsellinic acid by the polyketide synthase ausA. 3,5-dimethylorsellinic acid is then prenylated by the polyprenyl transferase ausN. Further epoxidation by the FAD-dependent monooxygenase ausM and cyclization by the probable terpene cyclase ausL lead to the formation of protoaustinoid A. Protoaustinoid A is then oxidized to spiro-lactone preaustinoid A3 by the combined action of the FAD-binding monooxygenases ausB and ausC, and the dioxygenase ausE. Acid-catalyzed keto-rearrangement and ring contraction of the tetraketide portion of preaustinoid A3 by ausJ lead to the formation of preaustinoid A4. The aldo-keto reductase ausK, with the help of ausH, is involved in the next step by transforming preaustinoid A4 into isoaustinone which is in turn hydroxylated by the P450 monooxygenase ausI to form austinolide. The cytochrome P450 monooxygenase ausG then modifies austinolide to austinol. Austinol is further acetylated to austin by the O-acetyltransferase ausP, which spontaneously changes to dehydroaustin. The cytochrome P450 monooxygenase then converts dehydroaustin is into 7-dehydrodehydroaustin. The hydroxylation catalyzed by ausR permits the second O-acetyltransferase ausQ to add an additional acetyl group to the molecule, leading to the formation of acetoxydehydroaustin. Due to genetic rearrangements of the clusters and the subsequent loss of some enzymes, the end product of the Penicillium brasilianum austinoid biosynthesis clusters is acetoxydehydroaustin. The sequence is that of Multifunctional dioxygenase ausE from Penicillium brasilianum.